The primary structure comprises 213 residues: MNDVYKCPVCGQLTESPTHCGVSAVKILDGAMRLKISKLLSLALRHSPSVLGLSLDKGGWADVKTALEGLRKAGIRADYEALYAVVALDEKGRFELKDGKIRARYGHTIDVEVEYEADSESKVLYHGTSRHLLPSIMAQGLLPMRRRYVHLSPDFATACQNARRRPLPVVIEIDAECLRARGYVVYAASGKVRLAKHVPPECLKKVVDCPTPS.

The protein belongs to the KptA/TPT1 family.

Removes the 2'-phosphate from RNA via an intermediate in which the phosphate is ADP-ribosylated by NAD followed by a presumed transesterification to release the RNA and generate ADP-ribose 1''-2''-cyclic phosphate (APPR&gt;P). May function as an ADP-ribosylase. This chain is Probable RNA 2'-phosphotransferase, found in Pyrobaculum aerophilum (strain ATCC 51768 / DSM 7523 / JCM 9630 / CIP 104966 / NBRC 100827 / IM2).